A 657-amino-acid chain; its full sequence is tRNA 5-methylaminomethyl-2-thiouridine biosynthesis bifunctional protein MnmC (657 aa).

Residues 1–238 (MPASTLLQHA…KWEVMSGEYT (238 aa)) form a tRNA (mnm(5)s(2)U34)-methyltransferase region. Residues 265–657 (IGAGLAGSAS…FGLRRLIRGK (393 aa)) are FAD-dependent cmnm(5)s(2)U34 oxidoreductase.

In the N-terminal section; belongs to the methyltransferase superfamily. tRNA (mnm(5)s(2)U34)-methyltransferase family. The protein in the C-terminal section; belongs to the DAO family. The cofactor is FAD.

The protein resides in the cytoplasm. It carries out the reaction 5-aminomethyl-2-thiouridine(34) in tRNA + S-adenosyl-L-methionine = 5-methylaminomethyl-2-thiouridine(34) in tRNA + S-adenosyl-L-homocysteine + H(+). Its function is as follows. Catalyzes the last two steps in the biosynthesis of 5-methylaminomethyl-2-thiouridine (mnm(5)s(2)U) at the wobble position (U34) in tRNA. Catalyzes the FAD-dependent demodification of cmnm(5)s(2)U34 to nm(5)s(2)U34, followed by the transfer of a methyl group from S-adenosyl-L-methionine to nm(5)s(2)U34, to form mnm(5)s(2)U34. This is tRNA 5-methylaminomethyl-2-thiouridine biosynthesis bifunctional protein MnmC from Pseudomonas putida (strain W619).